The following is a 250-amino-acid chain: tRNA (guanine-N(7)-)-methyltransferase (250 aa).

A compositionally biased stretch (basic and acidic residues) spans 1–10 (MTPDDPRDAS). Positions 1-30 (MTPDDPRDASDASLADATADSASRGHGSFF) are disordered. Positions 11–24 (DASLADATADSASR) are enriched in low complexity. Residues Glu-79, Glu-104, Asp-131, and Asp-153 each coordinate S-adenosyl-L-methionine. Residue Asp-153 is part of the active site. Residues Lys-157 and Asp-189 each contribute to the substrate site.

Belongs to the class I-like SAM-binding methyltransferase superfamily. TrmB family.

It carries out the reaction guanosine(46) in tRNA + S-adenosyl-L-methionine = N(7)-methylguanosine(46) in tRNA + S-adenosyl-L-homocysteine. Its pathway is tRNA modification; N(7)-methylguanine-tRNA biosynthesis. Its function is as follows. Catalyzes the formation of N(7)-methylguanine at position 46 (m7G46) in tRNA. The chain is tRNA (guanine-N(7)-)-methyltransferase from Rhodopseudomonas palustris (strain BisA53).